We begin with the raw amino-acid sequence, 476 residues long: Protein transport protein Sec61 subunit alpha isoform 1 (476 aa).

At 1 to 33 (MAIKFLEVIKPFCVILPEIQKPERKIQFKEKVL) the chain is on the cytoplasmic side. The chain crosses the membrane as a helical span at residues 34-53 (WTAITLFIFLVCCQIPLFGI). Over 54–76 (MSSDSADPFYWMRVILASNRGTL) the chain is Lumenal. A helical membrane pass occupies residues 77–96 (MELGISPIVTSGLIMQLLAG). Residues 97-117 (AKIIEVGDTPKDRALFNGAQK) are Cytoplasmic-facing. A helical transmembrane segment spans residues 118–138 (LFGMIITIGQSIVYVMTGMYG). The Lumenal segment spans residues 139-144 (DPSEMG). Residues 145–165 (AGICLLITIQLFVAGLIVLLL) form a helical membrane-spanning segment. The Cytoplasmic portion of the chain corresponds to 166–172 (DELLQKG). The helical transmembrane segment at 173–193 (YGLGSGISLFIATNICETIVW) threads the bilayer. Residues 194–240 (KAFSPTTVNTGRGMEFEGAIIALFHLLATRTDKVRALREAFYRQNLP) are Lumenal-facing. Residues 241-261 (NLMNLIATIFVFAVVIYFQGF) traverse the membrane as a helical segment. Over 262–288 (RVDLPIKSARYRGQYNTYPIKLFYTSN) the chain is Cytoplasmic. A helical membrane pass occupies residues 289-309 (IPIILQSALVSNLYVISQMLS). The Lumenal portion of the chain corresponds to 310-354 (ARFSGNLLVSLLGTWSDTSSGGPARAYPVGGLCYYLSPPESFGSV). Residues 355 to 375 (LEDPVHAVVYIVFMLGSCAFF) traverse the membrane as a helical segment. Residues 376 to 420 (SKTWIEVSGSSAKDVAKQLKEQQMVMRGHRETSMVHELNRYIPTA) are Cytoplasmic-facing. Residues 421–441 (AAFGGLCIGALSVLADFLGAI) traverse the membrane as a helical segment. Topologically, residues 442–445 (GSGT) are lumenal. The chain crosses the membrane as a helical span at residues 446–462 (GILLAVTIIYQYFEIFV). Topologically, residues 463 to 476 (KEQSEVGSMGALLF) are cytoplasmic.

This sequence belongs to the SecY/SEC61-alpha family. As to quaternary structure, the SEC61 channel-forming translocon complex consists of channel-forming core components SEC61A1, SEC61B and SEC61G and different auxiliary components such as SEC62 and SEC63. The SEC61 channel associates with the multi-pass translocon (MPT) complex. Expressed in proximal and distal tubules in kidney (at protein level).

It localises to the endoplasmic reticulum membrane. Its function is as follows. Component of SEC61 channel-forming translocon complex that mediates transport of signal peptide-containing precursor polypeptides across the endoplasmic reticulum (ER). Forms a ribosome receptor and a gated pore in the ER membrane, both functions required for cotranslational translocation of nascent polypeptides. May cooperate with auxiliary protein SEC62, SEC63 and HSPA5/BiP to enable post-translational transport of small presecretory proteins. The SEC61 channel is also involved in ER membrane insertion of transmembrane proteins: it mediates membrane insertion of the first few transmembrane segments of proteins, while insertion of subsequent transmembrane regions of multi-pass membrane proteins is mediated by the multi-pass translocon (MPT) complex. The SEC61 channel cooperates with the translocating protein TRAM1 to import nascent proteins into the ER. Controls the passive efflux of calcium ions from the ER lumen to the cytosol through SEC61 channel, contributing to the maintenance of cellular calcium homeostasis. Plays a critical role in nephrogenesis, specifically at pronephros stage. The protein is Protein transport protein Sec61 subunit alpha isoform 1 (SEC61A1) of Homo sapiens (Human).